A 1074-amino-acid polypeptide reads, in one-letter code: Collagen, type I, alpha 1a (1074 aa).

Over residues 1–13 (KSPAMPVPGPMGP) the composition is skewed to pro residues. The disordered stretch occupies residues 1-1010 (KSPAMPVPGP…PQEKAPDPYR (1010 aa)). A compositionally biased stretch (low complexity) spans 14-36 (MGPRSGPQGFPGEAGAAGAMGPR). Residues 45–59 (NGEDGESGKPGRGGE) are compositionally biased toward basic and acidic residues. Positions 129-147 (TGAAGAAGARGNDGAAGAA) are enriched in low complexity. Pro residues predominate over residues 149-162 (PPGPTGPAGPPGFP). The span at 163-181 (GGPGAKGDAGAQGGRGPEG) shows a compositional bias: gly residues. Low complexity-rich tracts occupy residues 182–225 (PAGA…AGAP), 234–272 (SGPQGAAGAPGPKGNTGEVGAPGAKGEAGAKGEAGAPGV), and 290–299 (EPGAAGARGA). The segment covering 301–313 (GERGGPGGRGFPG) has biased composition (gly residues). Low complexity-rich tracts occupy residues 377 to 392 (VGARGQPGVMGFPGPK), 469 to 530 (VPGE…QGMP), and 563 to 578 (RGLTGPLGLPGPAGAT). Residues 588–597 (GPVGPGGARG) show a composition bias toward gly residues. Composition is skewed to low complexity over residues 611–647 (AGFAGPPGADGQPGAKGEAGDNGAKGDAGPPGAAGPT) and 661–683 (PKGARGAAGPPGATGFPGAAGRV). Pro residues predominate over residues 685–697 (PPGPSGNPGPPGP). 2 stretches are compositionally biased toward low complexity: residues 715-742 (PAGRPGELGAAGPPGPAGEKGSPGSEGA) and 803-823 (PGLAGAPGEPGREGSPGSEGS). A compositionally biased stretch (pro residues) spans 847–857 (APGPPGAPGPV). Residues 871 to 890 (PAGPAGSAGPAGPRGPAGAP) are compositionally biased toward low complexity. Positions 893–907 (RGDKGESGEAGERGH) are enriched in basic and acidic residues. Positions 920–956 (SGSSGEQGPAGAAGPAGPRGPAGSAGSPGKDGMSGLP) are enriched in low complexity. Pro residues predominate over residues 974–986 (AGPPGPPGPPGAP). One can recognise a Fibrillar collagen NC1 domain in the interval 1014–1074 (LEVDSTLKSL…GLEVGPVCFL (61 aa)).

Belongs to the fibrillar collagen family.

The protein localises to the secreted. Its subcellular location is the extracellular space. The protein resides in the extracellular matrix. This chain is Collagen, type I, alpha 1a, found in Epinephelus marginatus (Dusky grouper).